A 694-amino-acid chain; its full sequence is Two-component response regulator ORR25 (694 aa).

Positions arginine 17–tryptophan 132 constitute a Response regulatory domain. Position 68 is a 4-aspartylphosphate (aspartate 68). The HTH myb-type domain occupies threonine 183–lysine 242. Residues proline 213–arginine 238 constitute a DNA-binding region (H-T-H motif). The tract at residues valine 326–lysine 349 is disordered. Over residues glycine 333–alanine 347 the composition is skewed to polar residues.

Belongs to the ARR family. Type-B subfamily. In terms of processing, two-component system major event consists of a His-to-Asp phosphorelay between a sensor histidine kinase (HK) and a response regulator (RR). In plants, the His-to-Asp phosphorelay involves an additional intermediate named Histidine-containing phosphotransfer protein (HPt). This multistep phosphorelay consists of a His-Asp-His-Asp sequential transfer of a phosphate group between first a His and an Asp of the HK protein, followed by the transfer to a conserved His of the HPt protein and finally the transfer to an Asp in the receiver domain of the RR protein.

It localises to the nucleus. Transcriptional activator that binds specific DNA sequence. Functions as a response regulator involved in His-to-Asp phosphorelay signal transduction system. Phosphorylation of the Asp residue in the receiver domain activates the ability of the protein to promote the transcription of target genes. May directly activate some type-A response regulators in response to cytokinins. This is Two-component response regulator ORR25 from Oryza sativa subsp. japonica (Rice).